The primary structure comprises 581 residues: Proline--tRNA ligase (581 aa).

It belongs to the class-II aminoacyl-tRNA synthetase family. ProS type 1 subfamily. In terms of assembly, homodimer.

It is found in the cytoplasm. It catalyses the reaction tRNA(Pro) + L-proline + ATP = L-prolyl-tRNA(Pro) + AMP + diphosphate. Catalyzes the attachment of proline to tRNA(Pro) in a two-step reaction: proline is first activated by ATP to form Pro-AMP and then transferred to the acceptor end of tRNA(Pro). As ProRS can inadvertently accommodate and process non-cognate amino acids such as alanine and cysteine, to avoid such errors it has two additional distinct editing activities against alanine. One activity is designated as 'pretransfer' editing and involves the tRNA(Pro)-independent hydrolysis of activated Ala-AMP. The other activity is designated 'posttransfer' editing and involves deacylation of mischarged Ala-tRNA(Pro). The misacylated Cys-tRNA(Pro) is not edited by ProRS. The sequence is that of Proline--tRNA ligase from Blochmanniella pennsylvanica (strain BPEN).